A 268-amino-acid polypeptide reads, in one-letter code: 3-methyl-2-oxobutanoate hydroxymethyltransferase (268 aa).

Residues Asp41 and Asp80 each contribute to the Mg(2+) site. Residues 41-42 (DS), Asp80, and Lys110 each bind 3-methyl-2-oxobutanoate. Residue Glu112 participates in Mg(2+) binding. Residue Glu178 is the Proton acceptor of the active site.

This sequence belongs to the PanB family. Homodecamer; pentamer of dimers. Mg(2+) is required as a cofactor.

It is found in the cytoplasm. The catalysed reaction is 3-methyl-2-oxobutanoate + (6R)-5,10-methylene-5,6,7,8-tetrahydrofolate + H2O = 2-dehydropantoate + (6S)-5,6,7,8-tetrahydrofolate. It functions in the pathway cofactor biosynthesis; coenzyme A biosynthesis. Catalyzes the reversible reaction in which hydroxymethyl group from 5,10-methylenetetrahydrofolate is transferred onto alpha-ketoisovalerate to form ketopantoate. In Natronomonas pharaonis (strain ATCC 35678 / DSM 2160 / CIP 103997 / JCM 8858 / NBRC 14720 / NCIMB 2260 / Gabara) (Halobacterium pharaonis), this protein is 3-methyl-2-oxobutanoate hydroxymethyltransferase.